A 224-amino-acid polypeptide reads, in one-letter code: 7-cyano-7-deazaguanine synthase (224 aa).

8–18 lines the ATP pocket; sequence LSGGMDSAAVI. 4 residues coordinate Zn(2+): C186, C196, C199, and C202.

The protein belongs to the QueC family. The cofactor is Zn(2+).

The catalysed reaction is 7-carboxy-7-deazaguanine + NH4(+) + ATP = 7-cyano-7-deazaguanine + ADP + phosphate + H2O + H(+). It participates in purine metabolism; 7-cyano-7-deazaguanine biosynthesis. Functionally, catalyzes the ATP-dependent conversion of 7-carboxy-7-deazaguanine (CDG) to 7-cyano-7-deazaguanine (preQ(0)). This is 7-cyano-7-deazaguanine synthase from Xanthomonas axonopodis pv. citri (strain 306).